A 106-amino-acid polypeptide reads, in one-letter code: Putative regulatory protein MalR (106 aa).

Positions 12 to 106 (CSIEYTLSFM…NLMHKWGQEN (95 aa)) constitute an HTH hxlR-type domain.

Functionally, potential regulator of the malBH genes. In Fusobacterium mortiferum, this protein is Putative regulatory protein MalR (malR).